We begin with the raw amino-acid sequence, 334 residues long: Ornithine carbamoyltransferase (334 aa).

Residues 56-59 (STRT), Gln-83, Arg-107, and 134-137 (HPTQ) contribute to the carbamoyl phosphate site. Residues Asn-168, Asp-232, and 236–237 (SM) each bind L-ornithine. Carbamoyl phosphate is bound by residues 274 to 275 (CL) and Arg-320.

This sequence belongs to the aspartate/ornithine carbamoyltransferase superfamily. OTCase family.

It localises to the cytoplasm. It catalyses the reaction carbamoyl phosphate + L-ornithine = L-citrulline + phosphate + H(+). It functions in the pathway amino-acid biosynthesis; L-arginine biosynthesis; L-arginine from L-ornithine and carbamoyl phosphate: step 1/3. Functionally, reversibly catalyzes the transfer of the carbamoyl group from carbamoyl phosphate (CP) to the N(epsilon) atom of ornithine (ORN) to produce L-citrulline. The chain is Ornithine carbamoyltransferase from Shigella boydii serotype 4 (strain Sb227).